Consider the following 307-residue polypeptide: Lipoyl synthase (307 aa).

7 residues coordinate [4Fe-4S] cluster: cysteine 55, cysteine 60, cysteine 66, cysteine 81, cysteine 85, cysteine 88, and serine 292. The 215-residue stretch at 67 to 281 (WEDREATFLI…ARHAEELGFS (215 aa)) folds into the Radical SAM core domain.

It belongs to the radical SAM superfamily. Lipoyl synthase family. [4Fe-4S] cluster is required as a cofactor.

Its subcellular location is the cytoplasm. It catalyses the reaction [[Fe-S] cluster scaffold protein carrying a second [4Fe-4S](2+) cluster] + N(6)-octanoyl-L-lysyl-[protein] + 2 oxidized [2Fe-2S]-[ferredoxin] + 2 S-adenosyl-L-methionine + 4 H(+) = [[Fe-S] cluster scaffold protein] + N(6)-[(R)-dihydrolipoyl]-L-lysyl-[protein] + 4 Fe(3+) + 2 hydrogen sulfide + 2 5'-deoxyadenosine + 2 L-methionine + 2 reduced [2Fe-2S]-[ferredoxin]. Its pathway is protein modification; protein lipoylation via endogenous pathway; protein N(6)-(lipoyl)lysine from octanoyl-[acyl-carrier-protein]: step 2/2. In terms of biological role, catalyzes the radical-mediated insertion of two sulfur atoms into the C-6 and C-8 positions of the octanoyl moiety bound to the lipoyl domains of lipoate-dependent enzymes, thereby converting the octanoylated domains into lipoylated derivatives. In Mycobacterium avium (strain 104), this protein is Lipoyl synthase.